Consider the following 834-residue polypeptide: Glycerol-3-phosphate acyltransferase (834 aa).

An HXXXXD motif motif is present at residues 309–314; it reads CHRSHI.

It belongs to the GPAT/DAPAT family.

The protein localises to the cell inner membrane. It carries out the reaction sn-glycerol 3-phosphate + an acyl-CoA = a 1-acyl-sn-glycero-3-phosphate + CoA. Its pathway is phospholipid metabolism; CDP-diacylglycerol biosynthesis; CDP-diacylglycerol from sn-glycerol 3-phosphate: step 1/3. The chain is Glycerol-3-phosphate acyltransferase from Pseudomonas aeruginosa (strain LESB58).